The primary structure comprises 130 residues: UPF0251 protein Mevan_1492 (130 aa).

This sequence belongs to the UPF0251 family.

The protein is UPF0251 protein Mevan_1492 of Methanococcus vannielii (strain ATCC 35089 / DSM 1224 / JCM 13029 / OCM 148 / SB).